Reading from the N-terminus, the 126-residue chain is DNA-directed RNA polymerase I subunit RPA12 (126 aa).

Zn(2+) is bound by residues C20, C23, C38, C41, C87, and C90. A C4-type zinc finger spans residues 20–41 (CSDCGSVLPLPGAQDTVTCTRC). A TFIIS-type zinc finger spans residues 83–123 (VDRRCPRCGHEGMAYHTRQMRSADEGQTVFYTCTNCKFQEK). The Hairpin motif lies at 106-107 (DE). Positions 115 and 118 each coordinate Zn(2+).

This sequence belongs to the archaeal RpoM/eukaryotic RPA12/RPB9/RPC11 RNA polymerase family. Component of the RNA polymerase I (Pol I) complex consisting of 13 subunits: a ten-subunit catalytic core composed of POLR1A/RPA1, POLR1B/RPA2, POLR1C/RPAC1, POLR1D/RPAC2, POLR1H/RPA12, POLR2E/RPABC1, POLR2F/RPABC2, POLR2H/RPABC3, POLR2K/RPABC4 and POLR2L/RPABC5; a mobile stalk subunit POLR1F/RPA43 protruding from the core and additional subunits homologous to general transcription factors POLR1E/RPA49 and POLR1G/RPA34. Part of Pol I pre-initiation complex (PIC), in which Pol I core assembles with RRN3 and promoter-bound UTBF and SL1/TIF-IB complex.

The protein localises to the nucleus. It is found in the nucleolus. In terms of biological role, core component of RNA polymerase I (Pol I), a DNA-dependent RNA polymerase which synthesizes ribosomal RNA precursors using the four ribonucleoside triphosphates as substrates. Can mediate Pol I proofreading of the nascent RNA transcript. Anchors into the Pol I active site to monitor transcription fidelity and cleave mis-incorporated 5'-ribonucleotides. The polypeptide is DNA-directed RNA polymerase I subunit RPA12 (Macaca mulatta (Rhesus macaque)).